The chain runs to 906 residues: MQHIFAFFCTGFLGAVVGANFPNNIQIGGLFPNQQSQEHAAFRFALSQLTEPPKLLPQIDIVNISDSFEMTYRFCSQFSKGVYAIFGFYERRTVNMLTSFCGALHVCFITPSFPVDTSNQFVLQLRPELQDALISIIDHYKWQKFVYIYDADRGLSVLQKVLDTAAEKNWQVTAVNILTTTEEGYRMLFQDLEKKKERLVVVDCESERLNAILGQIIKLEKNGIGYHYILANLGFMDIDLNKFKESGANVTGFQLVNYTDTIPAKIMQQWKNSDARDHTRVDWKRPKYTSALTYDGVKVMAEAFQSLRRQRIDISRRGNAGDCLANPAVPWGQGIDIQRALQQVRFEGLTGNVQFNEKGRRTNYTLHVIEMKHDGIRKIGYWNEDDKFVPAATDAQAGGDNSSVQNRTYIVTTILEDPYVMLKKNANQFEGNDRYEGYCVELAAEIAKHVGYSYRLEIVSDGKYGARDPDTKAWNGMVGELVYGRADVAVAPLTITLVREEVIDFSKPFMSLGISIMIKKPQKSKPGVFSFLDPLAYEIWMCIVFAYIGVSVVLFLVSRFSPYEWHSEEFEEGRDQTTSDQSNEFGIFNSLWFSLGAFMQQGCDISPRSLSGRIVGGVWWFFTLIIISSYTANLAAFLTVERMVSPIESAEDLAKQTEIAYGTLEAGSTKEFFRRSKIAVFEKMWTYMKSAEPSVFVRTTEEGMIRVRKSKGKYAYLLESTMNEYIEQRKPCDTMKVGGNLDSKGYGIATPKGSALRNPVNLAVLKLNEQGLLDKLKNKWWYDKGECGSGGGDSKDKTSALSLSNVAGVFYILIGGLGLAMLVALIEFCYKSRSESKRMKGFCLIPQQSINEAIRTSTLPRNSGAGASSGGSGENGRVVSHDFPKSMQSIPCMSHSSGMPLGATGL.

A signal peptide spans M1–G18. Over A19–A536 the chain is Extracellular. N-linked (GlcNAc...) asparagine glycans are attached at residues N63, N249, N257, N363, N401, and N406. C75 and C323 form a disulfide bridge. L-glutamate is bound by residues P492, T494, and R499. The helical transmembrane segment at Y537–V557 threads the bilayer. The Cytoplasmic portion of the chain corresponds to S558 to E584. Positions F585–Q600 form an intramembrane region, helical; Pore-forming. An intramembrane segment occupies Q601–C603. C603 carries S-palmitoyl cysteine lipidation. Topologically, residues D604 to S609 are cytoplasmic. Residues L610–Y630 traverse the membrane as a helical segment. Over T631–N805 the chain is Extracellular. S645 is modified (phosphoserine). The L-glutamate site is built by S668 and T669. Phosphoserine is present on S710. E719 contacts L-glutamate. A disulfide bridge links C732 with C787. The helical transmembrane segment at V806 to I826 threads the bilayer. Residues E827–L906 are Cytoplasmic-facing. Residue C829 is the site of S-palmitoyl cysteine attachment. Phosphoserine occurs at positions 849 and 863. The disordered stretch occupies residues R861–S880. Residues A903–L906 carry the PDZ-binding motif.

Belongs to the glutamate-gated ion channel (TC 1.A.10.1) family. GRIA1 subfamily. Homotetramer or heterotetramer of pore-forming glutamate receptor subunits; heteromeric assembly can be the result of both receptor subtype and flip or flop form and according the composition, one partner can be dominant with respect to the fast desensitizing current component, whereas the other can determine the steady-state component. Tetramers may be formed by the dimerization of dimers. Found in a complex with GRIA2, GRIA3, GRIA4, CNIH2, CNIH3, CACNG2, CACNG3, CACNG4, CACNG5, CACNG7 and CACNG8. Interacts with HIP1 and RASGRF2. Interacts with SYNDIG1 and GRIA2. Interacts with DLG1 (via C-terminus). Interacts with LRFN1. Interacts with PRKG2. Interacts with CNIH2 and CACNG2. Interacts with CACNG5; this interaction modulates the gating. Interacts (via C-terminus) with PDLIM4 (via LIM domain); this interaction as well as the interaction of PDLIM4 with alpha-actinin is required for their colocalization in early endosomes. Interacts with SNX27 (via PDZ domain); the interaction is required for recycling to the plasma membrane when endocytosed and prevent degradation in lysosomes. Interacts (via PDZ-binding motif) with SHANK3 (via PDZ domain). Interacts with CACNG3; associates GRIA1 with the adapter protein complex 4 (AP-4) to target GRIA1 to the somatodendritic compartment of neurons. Interacts with CACNG2; this interaction mediates traffick to the plasma membrane and modulation of desensitization. Interacts with CNIH2 and CNIH3; this interaction promotes expression at the plasma membrane and extensively modulates their gating properties by slowing deactivation and desensitization kinetics. Found in a complex with GRIA2, GRIA3, GRIA4, DLG4, CACNG8 and CNIH2. In terms of processing, palmitoylated. Depalmitoylated by CPT1C and upon L-glutamate stimulation. ZDHHC3/GODZ specifically palmitoylates Cys-603, which leads to Golgi retention and decreased cell surface expression. In contrast, Cys-829 palmitoylation does not affect cell surface expression but regulates stimulation-dependent endocytosis. Post-translationally, phosphorylated at Ser-645. Phosphorylated at Ser-710 by PKC. Phosphorylated at Ser-849 by PKC, PKA and CAMK2. Phosphorylated at Ser-863 by PKC, PKA and PRKG2. Phosphorylation of Ser-863 is reduced by induction of long-term depression and increased by induction of long-term potentiation. Widely expressed in brain.

The protein resides in the cell membrane. It is found in the endoplasmic reticulum membrane. Its subcellular location is the postsynaptic cell membrane. It localises to the postsynaptic density membrane. The protein localises to the cell projection. The protein resides in the dendrite. It is found in the dendritic spine. Its subcellular location is the early endosome membrane. It localises to the recycling endosome membrane. The protein localises to the presynapse. The protein resides in the synapse. The catalysed reaction is Ca(2+)(in) = Ca(2+)(out). The enzyme catalyses Na(+)(in) = Na(+)(out). It catalyses the reaction Mg(2+)(in) = Mg(2+)(out). It carries out the reaction Li(+)(in) = Li(+)(out). The catalysed reaction is K(+)(in) = K(+)(out). The enzyme catalyses Sr(2+)(in) = Sr(2+)(out). Its function is as follows. Ionotropic glutamate receptor that functions as a ligand-gated cation channel, gated by L-glutamate and glutamatergic agonists such as alpha-amino-3-hydroxy-5-methyl-4-isoxazolepropionic acid (AMPA), quisqualic acid, and kainic acid. L-glutamate acts as an excitatory neurotransmitter at many synapses in the central nervous system. Binding of the excitatory neurotransmitter L-glutamate induces a conformation change, leading to the opening of the cation channel, and thereby converts the chemical signal to an electrical impulse upon entry of monovalent and divalent cations such as sodium and calcium. The receptor then desensitizes rapidly and enters in a transient inactive state, characterized by the presence of bound agonist. In the presence of CACNG2 or CACNG4 or CACNG7 or CACNG8, shows resensitization which is characterized by a delayed accumulation of current flux upon continued application of L-glutamate. Resensitization is blocked by CNIH2 through interaction with CACNG8 in the CACNG8-containing AMPA receptors complex. Calcium (Ca(2+)) permeability depends on subunits composition and, heteromeric channels containing edited GRIA2 subunit are calcium-impermeable. Also permeable to other divalents cations such as strontium(2+) and magnesium(2+) and monovalent cations such as potassium(1+) and lithium(1+). The polypeptide is Glutamate receptor 1 (Homo sapiens (Human)).